Reading from the N-terminus, the 506-residue chain is Phenylacetaldehyde synthase (506 aa).

Pro101, His202, and His317 together coordinate L-phenylalanine. At Lys318 the chain carries N6-(pyridoxal phosphate)lysine.

Belongs to the group II decarboxylase family. In terms of assembly, homotetramer. Pyridoxal 5'-phosphate is required as a cofactor. Highly expressed in corolla limbs and at lower levels in corolla tubes and ovaries.

It carries out the reaction L-phenylalanine + O2 + H2O + H(+) = 2-phenylacetaldehyde + H2O2 + NH4(+) + CO2. Its function is as follows. Bifunctional enzyme that catalyzes the decarboxylation of L-phenylalanine to 2-phenylethylamine, which is then oxidized to form 2-phenylacetaldehyde, a constituent of floral scent. 2-phenylacetaldehyde is a precursor of 2-phenylethanol, another constituent of floral scent. This is Phenylacetaldehyde synthase from Petunia hybrida (Petunia).